The primary structure comprises 257 residues: Ribonuclease HII (257 aa).

The RNase H type-2 domain maps to 71–257; that stretch reads ELIAGIDEVG…EPIKSMVNFK (187 aa). A divalent metal cation is bound by residues aspartate 77, glutamate 78, and aspartate 169.

This sequence belongs to the RNase HII family. Mn(2+) serves as cofactor. The cofactor is Mg(2+).

It localises to the cytoplasm. The catalysed reaction is Endonucleolytic cleavage to 5'-phosphomonoester.. Its function is as follows. Endonuclease that specifically degrades the RNA of RNA-DNA hybrids. This Lactococcus lactis subsp. cremoris (strain MG1363) protein is Ribonuclease HII (rnhB).